Here is a 274-residue protein sequence, read N- to C-terminus: Thymidylate synthase (274 aa).

DUMP is bound at residue Arg-21. His-51 serves as a coordination point for (6R)-5,10-methylene-5,6,7,8-tetrahydrofolate. 123-124 (RR) contributes to the dUMP binding site. The active-site Nucleophile is Cys-156. Residues 176 to 179 (RSAD), Asn-187, and 217 to 219 (HIY) each bind dUMP. Asp-179 serves as a coordination point for (6R)-5,10-methylene-5,6,7,8-tetrahydrofolate. Ser-273 is a (6R)-5,10-methylene-5,6,7,8-tetrahydrofolate binding site.

Belongs to the thymidylate synthase family. Bacterial-type ThyA subfamily. Homodimer.

It is found in the cytoplasm. The enzyme catalyses dUMP + (6R)-5,10-methylene-5,6,7,8-tetrahydrofolate = 7,8-dihydrofolate + dTMP. The protein operates within pyrimidine metabolism; dTTP biosynthesis. Catalyzes the reductive methylation of 2'-deoxyuridine-5'-monophosphate (dUMP) to 2'-deoxythymidine-5'-monophosphate (dTMP) while utilizing 5,10-methylenetetrahydrofolate (mTHF) as the methyl donor and reductant in the reaction, yielding dihydrofolate (DHF) as a by-product. This enzymatic reaction provides an intracellular de novo source of dTMP, an essential precursor for DNA biosynthesis. The protein is Thymidylate synthase of Francisella philomiragia subsp. philomiragia (strain ATCC 25017 / CCUG 19701 / FSC 153 / O#319-036).